A 91-amino-acid chain; its full sequence is Long neurotoxin OH-37 (91 aa).

A signal peptide spans 1 to 21 (MKTLLLTLVVMTIVCLDLGYS). Disulfide bonds link cysteine 24–cysteine 41, cysteine 34–cysteine 62, cysteine 47–cysteine 51, cysteine 66–cysteine 77, and cysteine 78–cysteine 83.

Belongs to the three-finger toxin family. Long-chain subfamily. Type II alpha-neurotoxin sub-subfamily. As to expression, expressed by the venom gland.

It is found in the secreted. Binds with high affinity to muscular (alpha-1/CHRNA1) and neuronal (alpha-7/CHRNA7) nicotinic acetylcholine receptor (nAChR) and inhibits acetylcholine from binding to the receptor, thereby impairing neuromuscular and neuronal transmission. The chain is Long neurotoxin OH-37 from Ophiophagus hannah (King cobra).